Reading from the N-terminus, the 404-residue chain is Nicotinate phosphoribosyltransferase (404 aa).

At histidine 224 the chain carries Phosphohistidine; by autocatalysis.

It belongs to the NAPRTase family. Post-translationally, transiently phosphorylated on a His residue during the reaction cycle. Phosphorylation strongly increases the affinity for substrates and increases the rate of nicotinate D-ribonucleotide production. Dephosphorylation regenerates the low-affinity form of the enzyme, leading to product release.

The enzyme catalyses nicotinate + 5-phospho-alpha-D-ribose 1-diphosphate + ATP + H2O = nicotinate beta-D-ribonucleotide + ADP + phosphate + diphosphate. It functions in the pathway cofactor biosynthesis; NAD(+) biosynthesis; nicotinate D-ribonucleotide from nicotinate: step 1/1. Catalyzes the synthesis of beta-nicotinate D-ribonucleotide from nicotinate and 5-phospho-D-ribose 1-phosphate at the expense of ATP. This Photorhabdus laumondii subsp. laumondii (strain DSM 15139 / CIP 105565 / TT01) (Photorhabdus luminescens subsp. laumondii) protein is Nicotinate phosphoribosyltransferase.